The chain runs to 79 residues: Acyl carrier protein 2 (79 aa).

Residues 2 to 77 (DDIETRVRKL…QAIDYLEEAV (76 aa)) enclose the Carrier domain. At Ser37 the chain carries O-(pantetheine 4'-phosphoryl)serine.

The protein belongs to the acyl carrier protein (ACP) family. In terms of processing, 4'-phosphopantetheine is transferred from CoA to a specific serine of apo-ACP by AcpS. This modification is essential for activity because fatty acids are bound in thioester linkage to the sulfhydryl of the prosthetic group.

Its subcellular location is the cytoplasm. It participates in lipid metabolism; fatty acid biosynthesis. Its function is as follows. Carrier of the growing fatty acid chain in fatty acid biosynthesis. This chain is Acyl carrier protein 2, found in Pseudomonas aeruginosa (strain ATCC 15692 / DSM 22644 / CIP 104116 / JCM 14847 / LMG 12228 / 1C / PRS 101 / PAO1).